The sequence spans 119 residues: Small ribosomal subunit protein uS10 (119 aa).

A2 carries the N-acetylalanine modification. K4 is covalently cross-linked (Glycyl lysine isopeptide (Lys-Gly) (interchain with G-Cter in ubiquitin)). K8 carries the post-translational modification N6-succinyllysine; alternate. A Glycyl lysine isopeptide (Lys-Gly) (interchain with G-Cter in ubiquitin); alternate cross-link involves residue K8. The residue at position 9 (T9) is a Phosphothreonine. K34 and K75 each carry N6-acetyllysine. Position 93 is a phosphoserine (S93).

This sequence belongs to the universal ribosomal protein uS10 family. In terms of assembly, component of the 40S small ribosomal subunit. Polyubiquitinated by ZNF598 via 'Lys-63'-linked ubiquitin chains when a ribosome has stalled, initiating the ribosome quality control (RQC) pathway to degrade the potentially detrimental aberrant nascent polypeptide. Deubiquitinated by OTUD3 and USP21, antagonizing ZNF598 activity. Post-translationally, ufmylated by UFL1.

It is found in the cytoplasm. Component of the small ribosomal subunit. The ribosome is a large ribonucleoprotein complex responsible for the synthesis of proteins in the cell. The sequence is that of Small ribosomal subunit protein uS10 (RPS20) from Sus scrofa (Pig).